Reading from the N-terminus, the 127-residue chain is MAKQSLDVSSDRRKARKAYFTAPSSQRRVLLSAPLSKELRAQYGIKALPIRRDDEVLVVRGSKKGQEGKISSVYRLKFAVQVDKVTKEKVNGASVPINLHPSKLVITKLHLDKDRKALIQRKGGKLE.

This sequence belongs to the universal ribosomal protein uL24 family. Component of the large ribosomal subunit (LSU). Mature yeast ribosomes consist of a small (40S) and a large (60S) subunit. The 40S small subunit contains 1 molecule of ribosomal RNA (18S rRNA) and 33 different proteins (encoded by 57 genes). The large 60S subunit contains 3 rRNA molecules (25S, 5.8S and 5S rRNA) and 46 different proteins (encoded by 81 genes).

It is found in the cytoplasm. Functionally, component of the ribosome, a large ribonucleoprotein complex responsible for the synthesis of proteins in the cell. The small ribosomal subunit (SSU) binds messenger RNAs (mRNAs) and translates the encoded message by selecting cognate aminoacyl-transfer RNA (tRNA) molecules. The large subunit (LSU) contains the ribosomal catalytic site termed the peptidyl transferase center (PTC), which catalyzes the formation of peptide bonds, thereby polymerizing the amino acids delivered by tRNAs into a polypeptide chain. The nascent polypeptides leave the ribosome through a tunnel in the LSU and interact with protein factors that function in enzymatic processing, targeting, and the membrane insertion of nascent chains at the exit of the ribosomal tunnel. This Saccharomyces cerevisiae (strain ATCC 204508 / S288c) (Baker's yeast) protein is Large ribosomal subunit protein uL24A.